The primary structure comprises 924 residues: LPS-assembly protein LptD (924 aa).

A signal peptide spans 1–33 (MAVKSLVFRRKFPLLVTGSLLALQPVAALTVQA). The interval 58 to 102 (NLPPRPAHTATSVSTAAAGSSVSGSGGETVEAEPTQRLVTESGGR) is disordered. The span at 66–90 (TATSVSTAAAGSSVSGSGGETVEAE) shows a compositional bias: low complexity.

This sequence belongs to the LptD family. In terms of assembly, component of the lipopolysaccharide transport and assembly complex. Interacts with LptE and LptA.

It localises to the cell outer membrane. In terms of biological role, together with LptE, is involved in the assembly of lipopolysaccharide (LPS) at the surface of the outer membrane. The polypeptide is LPS-assembly protein LptD (Pseudomonas aeruginosa (strain UCBPP-PA14)).